We begin with the raw amino-acid sequence, 319 residues long: Putative binding protein BAB2_1146 (319 aa).

A signal peptide spans 1-22 (MKRRTFLAMSLALTFLPSVALA).

The protein belongs to the bacterial solute-binding protein SsuA/TauA family. The complex is composed of two ATP-binding proteins (BAB2_1147), two transmembrane proteins (BAB2_1148) and a solute-binding protein (BAB2_1146).

The protein resides in the periplasm. In terms of biological role, probably part of an ABC transporter complex. In Brucella abortus (strain 2308), this protein is Putative binding protein BAB2_1146.